Here is a 179-residue protein sequence, read N- to C-terminus: GTP-dependent dephospho-CoA kinase (179 aa).

GTP-binding residues include Asp43, Val45, Asp62, Glu120, and Asp143.

The protein belongs to the GTP-dependent DPCK family.

The enzyme catalyses 3'-dephospho-CoA + GTP = GDP + CoA + H(+). Its pathway is cofactor biosynthesis; coenzyme A biosynthesis. In terms of biological role, catalyzes the GTP-dependent phosphorylation of the 3'-hydroxyl group of dephosphocoenzyme A to form coenzyme A (CoA). The chain is GTP-dependent dephospho-CoA kinase from Haloarcula marismortui (strain ATCC 43049 / DSM 3752 / JCM 8966 / VKM B-1809) (Halobacterium marismortui).